Here is a 233-residue protein sequence, read N- to C-terminus: Protein-L-isoaspartate O-methyltransferase (233 aa).

The active site involves Ser-83.

The protein belongs to the methyltransferase superfamily. L-isoaspartyl/D-aspartyl protein methyltransferase family.

The protein localises to the cytoplasm. It catalyses the reaction [protein]-L-isoaspartate + S-adenosyl-L-methionine = [protein]-L-isoaspartate alpha-methyl ester + S-adenosyl-L-homocysteine. In terms of biological role, catalyzes the methyl esterification of L-isoaspartyl residues in peptides and proteins that result from spontaneous decomposition of normal L-aspartyl and L-asparaginyl residues. It plays a role in the repair and/or degradation of damaged proteins. The polypeptide is Protein-L-isoaspartate O-methyltransferase (Opitutus terrae (strain DSM 11246 / JCM 15787 / PB90-1)).